We begin with the raw amino-acid sequence, 363 residues long: tRNA dimethylallyltransferase (363 aa).

Residues 1 to 55 form a unknown insert region; sequence MLACNDDTSLYLLVKQVTKKEIYSNDLENGNVKRGASMQSLYLIGDPKCCRNNSS. Residue 65–72 coordinates ATP; that stretch reads GPTASGKS. 67-72 is a binding site for substrate; sequence TASGKS. Interaction with substrate tRNA stretches follow at residues 90–93 and 214–218; these read DSMQ and QRLIR.

This sequence belongs to the IPP transferase family. In terms of assembly, monomer. Mg(2+) is required as a cofactor.

The catalysed reaction is adenosine(37) in tRNA + dimethylallyl diphosphate = N(6)-dimethylallyladenosine(37) in tRNA + diphosphate. Catalyzes the transfer of a dimethylallyl group onto the adenine at position 37 in tRNAs that read codons beginning with uridine, leading to the formation of N6-(dimethylallyl)adenosine (i(6)A). The polypeptide is tRNA dimethylallyltransferase (Rickettsia conorii (strain ATCC VR-613 / Malish 7)).